Consider the following 91-residue polypeptide: Small ribosomal subunit protein uS19 (91 aa).

This sequence belongs to the universal ribosomal protein uS19 family.

Protein S19 forms a complex with S13 that binds strongly to the 16S ribosomal RNA. This is Small ribosomal subunit protein uS19 from Lactobacillus delbrueckii subsp. bulgaricus (strain ATCC 11842 / DSM 20081 / BCRC 10696 / JCM 1002 / NBRC 13953 / NCIMB 11778 / NCTC 12712 / WDCM 00102 / Lb 14).